A 368-amino-acid chain; its full sequence is Quinolinate synthase (368 aa).

2 residues coordinate iminosuccinate: H46 and S63. Residue C110 coordinates [4Fe-4S] cluster. Iminosuccinate contacts are provided by residues 141 to 143 (YVN) and S162. C230 serves as a coordination point for [4Fe-4S] cluster. Residues 256–258 (HPE) and T273 each bind iminosuccinate. Residue C320 coordinates [4Fe-4S] cluster.

It belongs to the quinolinate synthase family. Type 3 subfamily. The cofactor is [4Fe-4S] cluster.

Its subcellular location is the cytoplasm. The catalysed reaction is iminosuccinate + dihydroxyacetone phosphate = quinolinate + phosphate + 2 H2O + H(+). Its pathway is cofactor biosynthesis; NAD(+) biosynthesis; quinolinate from iminoaspartate: step 1/1. Catalyzes the condensation of iminoaspartate with dihydroxyacetone phosphate to form quinolinate. The chain is Quinolinate synthase from Bacillus cereus (strain B4264).